The chain runs to 346 residues: Elongation factor Ts (346 aa).

The involved in Mg(2+) ion dislocation from EF-Tu stretch occupies residues 80–83; that stretch reads TDFV.

Belongs to the EF-Ts family.

The protein localises to the cytoplasm. Functionally, associates with the EF-Tu.GDP complex and induces the exchange of GDP to GTP. It remains bound to the aminoacyl-tRNA.EF-Tu.GTP complex up to the GTP hydrolysis stage on the ribosome. The protein is Elongation factor Ts of Streptococcus pneumoniae serotype 19F (strain G54).